The following is a 345-amino-acid chain: MAAGSGSGTPPGTPPPTLLTDLATGLWKTQTLTAAIETGLFEALAAGDADAPETAQRLGIGKRPAEILLTACTALGLLEQRDGRYRNTAVAAHYLVPGLPDYFGGYVQMVARYTAPGWLRATEAVRTDAPTKPVPDPDRNMFEEGNRPESFWEGLFTFSTLTARQLAASVDLSGVRRIMDVGGGAGATLIELCRQHPHLSGTVVDLPHVCALAGERIAAAGMTGRIDTAAADFFADPLPSGHDAVLLSMILHDWDESQNRKILASCLDALPSGGTVLISELLVDDDKSGPVDAALMSMNMLVGTWGRNYTGAEYTDWLRDAGCSEVRTVRFASPGANGVVAGVKA.

Aspartate 205 is an S-adenosyl-L-methionine binding site. The active-site Proton acceptor is the histidine 252.

Belongs to the class I-like SAM-binding methyltransferase superfamily. Cation-independent O-methyltransferase family.

The catalysed reaction is 3-hydroxy-5-methyl-1-naphthoate + S-adenosyl-L-methionine = 3-methoxy-5-methyl-1-naphthoate + S-adenosyl-L-homocysteine + H(+). Its pathway is antibiotic biosynthesis. Its activity is regulated as follows. Inhibited by different divalent cations, such as Mg(2+), Mn(2+), Fe(2+), Cu(2+) and Zn(2+). Its function is as follows. O-methyltransferase that mediates the formation of 3-methoxy-5-methyl-1-naphthoate from 3-hydroxy-5-methyl-1-naphthoate in the biosynthesis of the antitumor antibiotic azinomycin B. This chain is 3-hydroxy-5-methyl-1-naphthoate 3-O-methyltransferase, found in Streptomyces sahachiroi.